The following is a 162-amino-acid chain: Transcription elongation factor GreA (162 aa).

A coiled-coil region spans residues Met-1–Val-28.

Belongs to the GreA/GreB family.

In terms of biological role, necessary for efficient RNA polymerase transcription elongation past template-encoded arresting sites. The arresting sites in DNA have the property of trapping a certain fraction of elongating RNA polymerases that pass through, resulting in locked ternary complexes. Cleavage of the nascent transcript by cleavage factors such as GreA or GreB allows the resumption of elongation from the new 3'terminus. GreA releases sequences of 2 to 3 nucleotides. The polypeptide is Transcription elongation factor GreA (Sulfurovum sp. (strain NBC37-1)).